The primary structure comprises 407 residues: Cathepsin D (407 aa).

The first 20 residues, 1-20 (MQTPGVLLLILGLLDASSSA), serve as a signal peptide directing secretion. A propeptide spans 21 to 64 (LIRIPLRKFTSIRRTMTEVGGSVEDLILKGPITKYSMQSSPRTK) (activation peptide). Residues 79–402 (YYGEIGIGTP…DREYNRVGFA (324 aa)) enclose the Peptidase A1 domain. 2 disulfides stabilise this stretch: Cys-91/Cys-160 and Cys-110/Cys-117. Residue Asp-97 is part of the active site. Asn-134 and Asn-258 each carry an N-linked (GlcNAc...) asparagine glycan. A disulfide bridge connects residues Cys-281 and Cys-285. Residue Asp-290 is part of the active site. An intrachain disulfide couples Cys-324 to Cys-361.

This sequence belongs to the peptidase A1 family. As to quaternary structure, occurs as a mixture of both a single chain form and two types of two chain (light and heavy) forms. Interacts with ADAM30; this leads to activation of CTSD. N- and O-glycosylated. Post-translationally, undergoes proteolytic cleavage and activation by ADAM30.

It is found in the lysosome. Its subcellular location is the melanosome. The protein resides in the secreted. The protein localises to the extracellular space. The catalysed reaction is Specificity similar to, but narrower than, that of pepsin A. Does not cleave the 4-Gln-|-His-5 bond in B chain of insulin.. Acid protease active in intracellular protein breakdown. Plays a role in APP processing following cleavage and activation by ADAM30 which leads to APP degradation. This chain is Cathepsin D (Ctsd), found in Rattus norvegicus (Rat).